The sequence spans 212 residues: MSDEQSTPASGRPPRQSRGGLTSTGARKAASKSNRSRAREFALQALYQHLVGGNDVEAIDRFTRDLSGFHKADSVHYDALLRGCINSQVDLDALIAPKLDRTMAEISPIEHASMWIGVYEFQHCPDVPWRVVLNECIELAKEFGGTDGHKYVNAVLNGLAPTLRAAEVEHDRAGKGSAPAQPAAKADTATDAVADAATDAAAADDAADQAAG.

Disordered regions lie at residues 1-34 (MSDE…SKSN) and 169-212 (EHDR…QAAG). Low complexity predominate over residues 178–212 (APAQPAAKADTATDAVADAATDAAAADDAADQAAG).

Belongs to the NusB family.

In terms of biological role, involved in transcription antitermination. Required for transcription of ribosomal RNA (rRNA) genes. Binds specifically to the boxA antiterminator sequence of the ribosomal RNA (rrn) operons. This chain is Transcription antitermination protein NusB, found in Delftia acidovorans (strain DSM 14801 / SPH-1).